A 452-amino-acid chain; its full sequence is MASRINTNFTLIPNQKLRRSNRQTSCYSKTLGSGFQPISTFGNFKALPLEIFQIILKYLSVKDISMLSMVSKTVSQHIINYISTSSGSKRLLLQDFHNLELPDRRQDSAILEHYRSLGLLFKRCTLLLPTKERLKYIHKILTEVSCFKFNGCAAPMQCLGLTCYGMFLQTLTAGWDELECHRVYNFLCELTNLCRKIQMAVCSKPGSAQKLELRIRLFCRNVLLDHWTHRSDSAFWLTRILKPWPMVNQARLLYIIFGPISPQDGQVVWQEMIEEPTDEFSLKGLADAIKLLYDASTKEWTADDVISLVDELSVVPREWLLENNARLLMLSGNNICFSFMASKAVNGRTIELARLVVFLALVCEKELYCMDWTVKMMQKVCKVFSTPVERKNFLQNVANAFACVIMEMLQSIMSGDRDEDDRSFLNLFHLVHAQANFHKEVLYLTMNTPLST.

Residues 41–91 form the F-box domain; that stretch reads FGNFKALPLEIFQIILKYLSVKDISMLSMVSKTVSQHIINYISTSSGSKRL.

As to quaternary structure, part of a SCF (SKP1-cullin-F-box) protein ligase complex. As to expression, widely expressed, with highest levels in kidney, liver and pancreas. Down-regulated in tumors.

Its function is as follows. Probably recognizes and binds to some phosphorylated proteins and promotes their ubiquitination and degradation. This chain is F-box only protein 47, found in Homo sapiens (Human).